The chain runs to 706 residues: Ribosomal RNA large subunit methyltransferase K/L (706 aa).

One can recognise a THUMP domain in the interval 43–154 (LLYQSLLWSR…RDMASVALDL (112 aa)).

Belongs to the methyltransferase superfamily. RlmKL family.

It is found in the cytoplasm. The catalysed reaction is guanosine(2445) in 23S rRNA + S-adenosyl-L-methionine = N(2)-methylguanosine(2445) in 23S rRNA + S-adenosyl-L-homocysteine + H(+). The enzyme catalyses guanosine(2069) in 23S rRNA + S-adenosyl-L-methionine = N(2)-methylguanosine(2069) in 23S rRNA + S-adenosyl-L-homocysteine + H(+). In terms of biological role, specifically methylates the guanine in position 2445 (m2G2445) and the guanine in position 2069 (m7G2069) of 23S rRNA. This is Ribosomal RNA large subunit methyltransferase K/L from Serratia proteamaculans (strain 568).